The chain runs to 277 residues: Ribosomal RNA small subunit methyltransferase A (277 aa).

6 residues coordinate S-adenosyl-L-methionine: Asn-26, Leu-28, Gly-53, Glu-74, Asp-101, and Asn-123.

The protein belongs to the class I-like SAM-binding methyltransferase superfamily. rRNA adenine N(6)-methyltransferase family. RsmA subfamily.

It is found in the cytoplasm. The catalysed reaction is adenosine(1518)/adenosine(1519) in 16S rRNA + 4 S-adenosyl-L-methionine = N(6)-dimethyladenosine(1518)/N(6)-dimethyladenosine(1519) in 16S rRNA + 4 S-adenosyl-L-homocysteine + 4 H(+). In terms of biological role, specifically dimethylates two adjacent adenosines (A1518 and A1519) in the loop of a conserved hairpin near the 3'-end of 16S rRNA in the 30S particle. May play a critical role in biogenesis of 30S subunits. This chain is Ribosomal RNA small subunit methyltransferase A, found in Opitutus terrae (strain DSM 11246 / JCM 15787 / PB90-1).